Consider the following 296-residue polypeptide: Ribosomal protein L11 methyltransferase (296 aa).

S-adenosyl-L-methionine contacts are provided by Thr-139, Gly-163, Asp-185, and Asn-232.

It belongs to the methyltransferase superfamily. PrmA family.

Its subcellular location is the cytoplasm. The enzyme catalyses L-lysyl-[protein] + 3 S-adenosyl-L-methionine = N(6),N(6),N(6)-trimethyl-L-lysyl-[protein] + 3 S-adenosyl-L-homocysteine + 3 H(+). Functionally, methylates ribosomal protein L11. This is Ribosomal protein L11 methyltransferase from Picosynechococcus sp. (strain ATCC 27264 / PCC 7002 / PR-6) (Agmenellum quadruplicatum).